Here is a 338-residue protein sequence, read N- to C-terminus: MAQELKLGFKASAEQFDPRELVEIAVAAEEHGMDSVAVSDHFQPWRHNGGHAPFSLAWMAAVGERTKRVQIGTSVMTPTFRYNPAVIAQAFASMGCMYPGRIMLGVGTGEALNEYAAGFQGEWPEFKERFARLREAIRLMRELWTGDEVNFDGEYYHTQGAYMYDVPEQPIPVYVAAGGPVVARYAGRAGDGFICTSGKGADLYQEKLIPAVKEGAEKAERDFEAIDRMIEIKISYDPDPQLALENTRFWAPLSLTPEQKHSVNSSTEMERLADELPIEQVAKRWIVASDPDEAVEKVKFYTDCGLNHLVFHAPGHDQRRFLENFEKDLAPRLRKLSV.

D40 serves as a coordination point for coenzyme F420-(gamma-Glu)n. The active-site Proton donor is the H41. Residues T77 and 108 to 109 each bind coenzyme F420-(gamma-Glu)n; that span reads TG. E110 (proton acceptor) is an active-site residue. Residues N113, 178–179, and 181–182 each bind coenzyme F420-(gamma-Glu)n; these read GG and VV. T196, K199, K260, and R284 together coordinate substrate.

It belongs to the F420-dependent glucose-6-phosphate dehydrogenase family. As to quaternary structure, homodimer.

The enzyme catalyses oxidized coenzyme F420-(gamma-L-Glu)(n) + D-glucose 6-phosphate + H(+) = 6-phospho-D-glucono-1,5-lactone + reduced coenzyme F420-(gamma-L-Glu)(n). Its function is as follows. Catalyzes the coenzyme F420-dependent oxidation of glucose 6-phosphate (G6P) to 6-phosphogluconolactone. The chain is F420-dependent glucose-6-phosphate dehydrogenase from Gordonia bronchialis (strain ATCC 25592 / DSM 43247 / BCRC 13721 / JCM 3198 / KCTC 3076 / NBRC 16047 / NCTC 10667) (Rhodococcus bronchialis).